Consider the following 546-residue polypeptide: Transmembrane anterior posterior transformation protein 1 homolog (546 aa).

The interval 1–37 (MADAAMSGEEKEEDGGKRTTAATPAETLGFYEPSDGS) is disordered. The next 6 helical transmembrane spans lie at 92-112 (LMVF…TLLP), 149-169 (ILVI…YHLI), 219-239 (VIPH…LILV), 316-336 (LWVL…VDVV), 384-404 (GFIP…SVKV), and 413-433 (VVLF…VLLG). Residues 449-529 (FQPPTCQPGK…NSELKQKQAD (81 aa)) are disordered. The segment covering 478–505 (TANTSVTSQPTKAASTAQLLVESNSDKL) has biased composition (polar residues). The span at 514–529 (KDISGDNSELKQKQAD) shows a compositional bias: basic and acidic residues.

Belongs to the TAPT1 family.

The protein localises to the cytoplasm. It is found in the cytoskeleton. Its subcellular location is the microtubule organizing center. The protein resides in the centrosome. It localises to the cilium basal body. The protein localises to the membrane. In terms of biological role, plays a role in primary cilia formation. Involved in cartilage and bone development. May play a role in the differentiation of cranial neural crest cells. May act as a downstream effector of hoxc8 during development. This Xenopus laevis (African clawed frog) protein is Transmembrane anterior posterior transformation protein 1 homolog (tapt1).